A 277-amino-acid polypeptide reads, in one-letter code: tRNA pseudouridine synthase B (277 aa).

Asp-38 functions as the Nucleophile in the catalytic mechanism.

It belongs to the pseudouridine synthase TruB family. Type 1 subfamily.

It carries out the reaction uridine(55) in tRNA = pseudouridine(55) in tRNA. In terms of biological role, responsible for synthesis of pseudouridine from uracil-55 in the psi GC loop of transfer RNAs. In Sulfurovum sp. (strain NBC37-1), this protein is tRNA pseudouridine synthase B.